Reading from the N-terminus, the 77-residue chain is MALFRMLFLCAVLVLLTSKEGMSYEEPENDEGVACTGQYAESFCLNGGTCRYIQSIGEYYCICNGDYTGHRCEKKQV.

The signal sequence occupies residues 1-23 (MALFRMLFLCAVLVLLTSKEGMS). Positions 24 to 29 (YEEPEN) are excised as a propeptide. Positions 31-73 (EGVACTGQYAESFCLNGGTCRYIQSIGEYYCICNGDYTGHRCE) constitute an EGF-like domain. 3 disulfides stabilise this stretch: cysteine 35/cysteine 50, cysteine 44/cysteine 61, and cysteine 63/cysteine 72.

It belongs to the EGF domain peptide family.

Its subcellular location is the secreted. It localises to the nematocyst. Has both toxic and EGF activity. Its EGF activity consists of rounding cells (morphological change) and inducing tyrosine phosphorylation of the EGFR in A431 cells, but with a lower potency that human EGF. The polypeptide is U-actitoxin-Avd12a (Anemonia viridis (Snakelocks anemone)).